The following is a 428-amino-acid chain: Dihydroorotase (428 aa).

Zn(2+) is bound by residues His59 and His61. Substrate contacts are provided by residues 61–63 and Asn93; that span reads HFR. Residues Asp151, His178, and His231 each coordinate Zn(2+). Substrate is bound at residue Asn277. Asp304 provides a ligand contact to Zn(2+). Asp304 is an active-site residue. Residues His308 and 322 to 323 contribute to the substrate site; that span reads FG.

This sequence belongs to the metallo-dependent hydrolases superfamily. DHOase family. Class I DHOase subfamily. The cofactor is Zn(2+).

The enzyme catalyses (S)-dihydroorotate + H2O = N-carbamoyl-L-aspartate + H(+). The protein operates within pyrimidine metabolism; UMP biosynthesis via de novo pathway; (S)-dihydroorotate from bicarbonate: step 3/3. Its function is as follows. Catalyzes the reversible cyclization of carbamoyl aspartate to dihydroorotate. This Bacillus licheniformis (strain ATCC 14580 / DSM 13 / JCM 2505 / CCUG 7422 / NBRC 12200 / NCIMB 9375 / NCTC 10341 / NRRL NRS-1264 / Gibson 46) protein is Dihydroorotase.